The primary structure comprises 448 residues: Serine--tRNA ligase (448 aa).

Residue 246 to 248 coordinates L-serine; that stretch reads TAE. ATP is bound by residues 277-279 and Val293; that span reads RKE. Position 300 (Glu300) interacts with L-serine. 364 to 367 contacts ATP; sequence ELAS. An L-serine-binding site is contributed by Thr399.

It belongs to the class-II aminoacyl-tRNA synthetase family. Type-1 seryl-tRNA synthetase subfamily. In terms of assembly, homodimer. The tRNA molecule binds across the dimer.

Its subcellular location is the cytoplasm. It catalyses the reaction tRNA(Ser) + L-serine + ATP = L-seryl-tRNA(Ser) + AMP + diphosphate + H(+). The catalysed reaction is tRNA(Sec) + L-serine + ATP = L-seryl-tRNA(Sec) + AMP + diphosphate + H(+). Its pathway is aminoacyl-tRNA biosynthesis; selenocysteinyl-tRNA(Sec) biosynthesis; L-seryl-tRNA(Sec) from L-serine and tRNA(Sec): step 1/1. In terms of biological role, catalyzes the attachment of serine to tRNA(Ser). Is also able to aminoacylate tRNA(Sec) with serine, to form the misacylated tRNA L-seryl-tRNA(Sec), which will be further converted into selenocysteinyl-tRNA(Sec). This Pyrobaculum islandicum (strain DSM 4184 / JCM 9189 / GEO3) protein is Serine--tRNA ligase.